The chain runs to 473 residues: Ribosomal RNA small subunit methyltransferase F (473 aa).

S-adenosyl-L-methionine-binding positions include 124–130 (ASAPGSK), E148, D175, and D193. C246 serves as the catalytic Nucleophile.

This sequence belongs to the class I-like SAM-binding methyltransferase superfamily. RsmB/NOP family.

It is found in the cytoplasm. The enzyme catalyses cytidine(1407) in 16S rRNA + S-adenosyl-L-methionine = 5-methylcytidine(1407) in 16S rRNA + S-adenosyl-L-homocysteine + H(+). Its function is as follows. Specifically methylates the cytosine at position 1407 (m5C1407) of 16S rRNA. This chain is Ribosomal RNA small subunit methyltransferase F, found in Aliivibrio fischeri (strain ATCC 700601 / ES114) (Vibrio fischeri).